We begin with the raw amino-acid sequence, 172 residues long: Large ribosomal subunit protein uL10 (172 aa).

It belongs to the universal ribosomal protein uL10 family. In terms of assembly, part of the ribosomal stalk of the 50S ribosomal subunit. The N-terminus interacts with L11 and the large rRNA to form the base of the stalk. The C-terminus forms an elongated spine to which L12 dimers bind in a sequential fashion forming a multimeric L10(L12)X complex.

Its function is as follows. Forms part of the ribosomal stalk, playing a central role in the interaction of the ribosome with GTP-bound translation factors. In Bradyrhizobium sp. (strain ORS 278), this protein is Large ribosomal subunit protein uL10.